The following is a 745-amino-acid chain: Capsid protein (745 aa).

Disordered regions lie at residues 44–64 (RRRFRRRRRRRGRPRYRGRRK), 580–602 (SQAIDDPSQKPTHALPEPGTLPR), 638–662 (EYSSDDENFSPGPSKRPALDTRPEG), and 678–699 (QDSQDSEESQEEAPLLEEQAHQ). Residues 681 to 692 (QDSEESQEEAPL) are compositionally biased toward acidic residues.

The protein belongs to the anelloviridae capsid protein family.

The protein localises to the virion. Its function is as follows. Self assemble to form an icosahedral capsid. The protein is Capsid protein of Torque teno virus (isolate Human/China/CT23F/2001) (TTV).